A 375-amino-acid chain; its full sequence is Queuine tRNA-ribosyltransferase (375 aa).

Asp93 (proton acceptor) is an active-site residue. Substrate contacts are provided by residues 93–97 (DSGGF), Asp147, Gln191, and Gly218. The RNA binding stretch occupies residues 249 to 255 (GVGTPLD). The active-site Nucleophile is Asp268. The segment at 273–277 (TRNAR) is RNA binding; important for wobble base 34 recognition. Zn(2+) is bound by residues Cys306, Cys308, Cys311, and His337.

It belongs to the queuine tRNA-ribosyltransferase family. As to quaternary structure, homodimer. Within each dimer, one monomer is responsible for RNA recognition and catalysis, while the other monomer binds to the replacement base PreQ1. Zn(2+) is required as a cofactor.

It carries out the reaction 7-aminomethyl-7-carbaguanine + guanosine(34) in tRNA = 7-aminomethyl-7-carbaguanosine(34) in tRNA + guanine. The protein operates within tRNA modification; tRNA-queuosine biosynthesis. Functionally, catalyzes the base-exchange of a guanine (G) residue with the queuine precursor 7-aminomethyl-7-deazaguanine (PreQ1) at position 34 (anticodon wobble position) in tRNAs with GU(N) anticodons (tRNA-Asp, -Asn, -His and -Tyr). Catalysis occurs through a double-displacement mechanism. The nucleophile active site attacks the C1' of nucleotide 34 to detach the guanine base from the RNA, forming a covalent enzyme-RNA intermediate. The proton acceptor active site deprotonates the incoming PreQ1, allowing a nucleophilic attack on the C1' of the ribose to form the product. After dissociation, two additional enzymatic reactions on the tRNA convert PreQ1 to queuine (Q), resulting in the hypermodified nucleoside queuosine (7-(((4,5-cis-dihydroxy-2-cyclopenten-1-yl)amino)methyl)-7-deazaguanosine). This Nitratidesulfovibrio vulgaris (strain DP4) (Desulfovibrio vulgaris) protein is Queuine tRNA-ribosyltransferase.